The sequence spans 568 residues: Periplasmic trehalase (568 aa).

Residues 1 to 39 (MPYATARSGDVMSSAAPPCCTSLLGLSLSMFVAPGTLTA) form the signal peptide. Residues arginine 169, 176-177 (WD), asparagine 213, 222-224 (RSQ), 294-296 (RPE), and glycine 327 each bind substrate. Residues aspartate 329 and glutamate 511 each act as proton donor/acceptor in the active site. Position 526 (glutamate 526) interacts with substrate.

It belongs to the glycosyl hydrolase 37 family.

Its subcellular location is the periplasm. The enzyme catalyses alpha,alpha-trehalose + H2O = alpha-D-glucose + beta-D-glucose. Provides the cells with the ability to utilize trehalose at high osmolarity by splitting it into glucose molecules that can subsequently be taken up by the phosphotransferase-mediated uptake system. The polypeptide is Periplasmic trehalase (Xanthomonas axonopodis pv. citri (strain 306)).